We begin with the raw amino-acid sequence, 120 residues long: Flagellar protein FliT (120 aa).

The interval 1–50 (MERHQHLLSEYQQILTLSEQMLVLATEGNWDALVDLEMTYLKAVESTANI) is required for homodimerization. The interval 60–98 (LQDLLREKLRAILDNEIEIKRLLQLRLDRLSDLVGQSTK) is fliD binding.

The protein belongs to the FliT family. Homodimer. Interacts with FliD and FlhC.

The protein localises to the cytoplasm. Its subcellular location is the cytosol. Dual-function protein that regulates the transcription of class 2 flagellar operons and that also acts as an export chaperone for the filament-capping protein FliD. As a transcriptional regulator, acts as an anti-FlhDC factor; it directly binds FlhC, thus inhibiting the binding of the FlhC/FlhD complex to class 2 promoters, resulting in decreased expression of class 2 flagellar operons. As a chaperone, effects FliD transition to the membrane by preventing its premature polymerization, and by directing it to the export apparatus. The chain is Flagellar protein FliT from Yersinia enterocolitica serotype O:8 / biotype 1B (strain NCTC 13174 / 8081).